Here is a 421-residue protein sequence, read N- to C-terminus: Adenylosuccinate synthetase (421 aa).

GTP is bound by residues 11–17 (GDEGKGK) and 39–41 (GHT). The active-site Proton acceptor is Asp-12. Mg(2+) contacts are provided by Asp-12 and Gly-39. IMP is bound by residues 12–15 (DEGK), 37–40 (NAGH), Thr-129, Arg-143, Asn-219, Thr-234, and Arg-298. The active-site Proton donor is the His-40. 294 to 300 (VTTGRRR) is a binding site for substrate. GTP is bound by residues Arg-300, 326–328 (KLD), and 409–411 (GTG).

Belongs to the adenylosuccinate synthetase family. As to quaternary structure, homodimer. It depends on Mg(2+) as a cofactor.

It localises to the cytoplasm. It carries out the reaction IMP + L-aspartate + GTP = N(6)-(1,2-dicarboxyethyl)-AMP + GDP + phosphate + 2 H(+). It participates in purine metabolism; AMP biosynthesis via de novo pathway; AMP from IMP: step 1/2. Plays an important role in the de novo pathway and in the salvage pathway of purine nucleotide biosynthesis. Catalyzes the first committed step in the biosynthesis of AMP from IMP. This Paracoccidioides brasiliensis (strain Pb03) protein is Adenylosuccinate synthetase.